Here is a 171-residue protein sequence, read N- to C-terminus: Adenine phosphoribosyltransferase (171 aa).

This sequence belongs to the purine/pyrimidine phosphoribosyltransferase family. As to quaternary structure, homodimer.

It is found in the cytoplasm. It catalyses the reaction AMP + diphosphate = 5-phospho-alpha-D-ribose 1-diphosphate + adenine. The protein operates within purine metabolism; AMP biosynthesis via salvage pathway; AMP from adenine: step 1/1. Functionally, catalyzes a salvage reaction resulting in the formation of AMP, that is energically less costly than de novo synthesis. The chain is Adenine phosphoribosyltransferase from Citrifermentans bemidjiense (strain ATCC BAA-1014 / DSM 16622 / JCM 12645 / Bem) (Geobacter bemidjiensis).